Here is a 60-residue protein sequence, read N- to C-terminus: Three-finger toxin Mnn I (60 aa).

Disulfide bonds link Cys3–Cys22, Cys17–Cys39, Cys41–Cys52, and Cys53–Cys58.

It belongs to the three-finger toxin family. Short-chain subfamily. Type I alpha-neurotoxin sub-subfamily. In terms of tissue distribution, expressed by the venom gland.

Its subcellular location is the secreted. Its function is as follows. Binds to muscle nicotinic acetylcholine receptor (nAChR) and inhibit acetylcholine from binding to the receptor, thereby impairing neuromuscular transmission. The sequence is that of Three-finger toxin Mnn I from Micrurus nigrocinctus (Central American coral snake).